Consider the following 721-residue polypeptide: Translation initiation factor eIF2B subunit epsilon (721 aa).

The span at Met-1 to Val-13 shows a compositional bias: low complexity. Positions Met-1–Pro-40 are disordered. Ala-2 bears the N-acetylalanine mark. Arg-19 is subject to Omega-N-methylarginine. A compositionally biased stretch (gly residues) spans Ala-22–Arg-33. Ser-27 is modified (phosphoserine). Glycyl lysine isopeptide (Lys-Gly) (interchain with G-Cter in ubiquitin) cross-links involve residues Lys-61 and Lys-103. At Ser-130 the chain carries Phosphoserine. Residues Lys-141 and Lys-217 each participate in a glycyl lysine isopeptide (Lys-Gly) (interchain with G-Cter in ubiquitin) cross-link. Position 322 is a phosphothreonine (Thr-322). Disordered regions lie at residues Pro-444–Tyr-483 and Glu-523–Met-547. Phosphoserine is present on residues Ser-450, Ser-466, Ser-469, Ser-532, and Ser-540. Acidic residues-rich tracts occupy residues Ala-456–Ala-471 and Glu-523–Glu-537. One can recognise a W2 domain in the interval Gly-543–Asp-720. At Ser-544 the chain carries Phosphoserine; by DYRK2. Residue Ser-717 is modified to Phosphoserine.

The protein belongs to the eIF-2B gamma/epsilon subunits family. Component of the translation initiation factor 2B (eIF2B) complex which is a heterodecamer of two sets of five different subunits: alpha, beta, gamma, delta and epsilon. Subunits alpha, beta and delta comprise a regulatory subcomplex and subunits epsilon and gamma comprise a catalytic subcomplex. Within the complex, the hexameric regulatory complex resides at the center, with the two heterodimeric catalytic subcomplexes bound on opposite sides. In terms of processing, phosphorylated at Ser-544 by DYRK2; this is required for subsequent phosphorylation by GSK3B. Phosphorylated on serine and threonine residues by GSK3B; phosphorylation inhibits its function. Post-translationally, polyubiquitinated, probably by NEDD4.

It localises to the cytoplasm. The protein localises to the cytosol. With respect to regulation, activated by the chemical integrated stress response (ISR) inhibitor ISRIB which stimulates guanine nucleotide exchange factor activity for both phosphorylated and unphosphorylated eIF2. Functionally, acts as a component of the translation initiation factor 2B (eIF2B) complex, which catalyzes the exchange of GDP for GTP on eukaryotic initiation factor 2 (eIF2) gamma subunit. Its guanine nucleotide exchange factor activity is repressed when bound to eIF2 complex phosphorylated on the alpha subunit, thereby limiting the amount of methionyl-initiator methionine tRNA available to the ribosome and consequently global translation is repressed. This chain is Translation initiation factor eIF2B subunit epsilon (EIF2B5), found in Homo sapiens (Human).